The sequence spans 432 residues: Histidinol dehydrogenase (432 aa).

Residues S240, Q262, and H265 each coordinate substrate. Residues Q262 and H265 each coordinate Zn(2+). Catalysis depends on proton acceptor residues E330 and H331. 4 residues coordinate substrate: H331, D364, E418, and H423. D364 lines the Zn(2+) pocket. H423 provides a ligand contact to Zn(2+).

Belongs to the histidinol dehydrogenase family. The cofactor is Zn(2+).

The catalysed reaction is L-histidinol + 2 NAD(+) + H2O = L-histidine + 2 NADH + 3 H(+). It functions in the pathway amino-acid biosynthesis; L-histidine biosynthesis; L-histidine from 5-phospho-alpha-D-ribose 1-diphosphate: step 9/9. In terms of biological role, catalyzes the sequential NAD-dependent oxidations of L-histidinol to L-histidinaldehyde and then to L-histidine. The polypeptide is Histidinol dehydrogenase (Wolinella succinogenes (strain ATCC 29543 / DSM 1740 / CCUG 13145 / JCM 31913 / LMG 7466 / NCTC 11488 / FDC 602W) (Vibrio succinogenes)).